The following is a 693-amino-acid chain: ATP-dependent DNA helicase RecG (693 aa).

Residues 48-146 form a wedge domain region; sequence THLYPIGELL…GDLSTPELQE (99 aa). A Helicase ATP-binding domain is found at 283-448; the sequence is DMALDVPMMR…AYADLDTSVI (166 aa). 296 to 303 contacts ATP; the sequence is GDVGSGKT. The DEAH box signature appears at 397–400; it reads DEQH. The 147-residue stretch at 482–628 folds into the Helicase C-terminal domain; that stretch reads EGRQAYWVCT…GFVIAQKDLE (147 aa).

The protein belongs to the helicase family. RecG subfamily. As to quaternary structure, monomer.

It catalyses the reaction Couples ATP hydrolysis with the unwinding of duplex DNA by translocating in the 3'-5' direction.. The catalysed reaction is ATP + H2O = ADP + phosphate + H(+). Its function is as follows. Plays a critical role in recombination and DNA repair. Helps process Holliday junction intermediates to mature products by catalyzing branch migration. Has replication fork regression activity, unwinds stalled or blocked replication forks to make a HJ that can be resolved. Has a DNA unwinding activity characteristic of a DNA helicase with 3'-5' polarity. Functionally, plays a role in recovery after DNA ADP-ribosylation. The polypeptide is ATP-dependent DNA helicase RecG (Escherichia coli O127:H6 (strain E2348/69 / EPEC)).